Consider the following 401-residue polypeptide: Keratin-associated protein 10-4 (401 aa).

35 consecutive repeat copies span residues 36-40 (CCEPP), 41-45 (CCAPS), 46-50 (CCAPA), 67-71 (CCPVT), 89-93 (CCQQS), 99-103 (CCASS), 109-113 (CCVPV), 114-118 (CCKTV), 119-123 (CCKPV), 124-128 (CCVPV), 129-133 (CCGDS), 135-139 (CCQQS), 145-149 (CCTSS), 155-159 (CCVPI), 160-164 (CCKPV), 172-176 (CCQQS), 186-190 (CCQAV), 208-212 (CCQQS), 218-222 (CCTSS), 228-232 (CCVPV), 233-237 (CCKTV), 238-242 (CCKPV), 250-254 (CCQQS), 270-274 (CCVPV), 275-279 (CCKPV), 280-284 (CCKPV), 297-301 (CCQQS), 307-311 (CCTSS), 317-321 (CCVPV), 322-326 (CCKPV), 339-343 (CCQQS), 349-353 (CCTTS), 354-358 (CCRPS), 373-377 (CCVPV), and 391-395 (CCRPA). The tract at residues 36 to 395 (CCEPPCCAPS…SCQPSCCRPA (360 aa)) is 36 X 5 AA repeats of C-C-X(3).

This sequence belongs to the KRTAP type 10 family. As to quaternary structure, interacts with hair keratins. As to expression, restricted to hair root, not detected in any other tissues.

Functionally, in the hair cortex, hair keratin intermediate filaments are embedded in an interfilamentous matrix, consisting of hair keratin-associated proteins (KRTAP), which are essential for the formation of a rigid and resistant hair shaft through their extensive disulfide bond cross-linking with abundant cysteine residues of hair keratins. The matrix proteins include the high-sulfur and high-glycine-tyrosine keratins. The protein is Keratin-associated protein 10-4 (KRTAP10-4) of Homo sapiens (Human).